The chain runs to 258 residues: F-box/SPRY domain-containing protein 1 (258 aa).

In terms of domain architecture, F-box spans 6 to 54; the sequence is TEYAPDIPDNVLELIFSYLKLQDLRNCSLVCKSWNRFLNDENNEVWRAQ. The B30.2/SPRY domain maps to 64-256; the sequence is FKTDLLSVVP…ISMVYLGPPL (193 aa).

It belongs to the FBXO45/Fsn family. In terms of assembly, component of an E3 ubiquitin ligase complex composed of hiw and Fsn.

It localises to the synapse. It participates in protein modification; protein ubiquitination. Required in the presynaptic motoneuron to down-regulate the levels of wnd and restrain synaptic terminal growth at the neuromuscular junction (NMJ). The chain is F-box/SPRY domain-containing protein 1 from Aedes aegypti (Yellowfever mosquito).